A 101-amino-acid chain; its full sequence is Small ribosomal subunit protein bS18c (101 aa).

It belongs to the bacterial ribosomal protein bS18 family. Part of the 30S ribosomal subunit.

The protein resides in the plastid. It is found in the chloroplast. In Oenothera biennis (German evening primrose), this protein is Small ribosomal subunit protein bS18c.